The following is a 1749-amino-acid chain: Kinase non-catalytic C-lobe domain-containing protein 1 (1749 aa).

In terms of domain architecture, KIND 1 spans 37 to 217 (VSLADILSLR…QDVSESSWRE (181 aa)). Disordered stretches follow at residues 210-275 (VSES…SHSR) and 361-435 (CRLW…ARQL). 2 stretches are compositionally biased toward basic and acidic residues: residues 363 to 373 (LWPEQEPEHQL) and 410 to 430 (ADPRDASGEAQTPRDDERIPE). One can recognise a KIND 2 domain in the interval 444–608 (VSLQDLLSQL…RASICQVYQE (165 aa)). 2 disordered regions span residues 689-871 (ARDQ…RPAD) and 962-1061 (QASP…GGAS). Positions 702 to 717 (ERGGQREGEGEEKLSL) are enriched in basic and acidic residues. 2 stretches are compositionally biased toward low complexity: residues 739–748 (QGAAPEPLGA) and 766–779 (PANQPEGASSAAPG). A compositionally biased stretch (basic residues) spans 823 to 833 (HGPRHPPKPPR). Positions 853-871 (GERDDQSPDSVPERPRPAD) are enriched in basic and acidic residues. Ser-964 carries the phosphoserine modification. Residues 980–990 (SQSPRSPSSKR) are compositionally biased toward low complexity. The span at 1005-1019 (RTSSRAPCSPTSVSD) shows a compositional bias: polar residues. Residues 1040–1056 (VKAERAQQPEAGEDRRP) show a composition bias toward basic and acidic residues. Positions 1133 to 1190 (QQLMMEKRNYRKTLKFYQKLLQKEKRNKGSDVKTMLSKLKGQLEEMKSRVQFLSLVKK) form a coiled coil. In terms of domain architecture, N-terminal Ras-GEF spans 1246-1371 (KARILQAGTP…HLLGLLEVGM (126 aa)). The Ras-GEF domain maps to 1468-1719 (STHQLFSQLT…SGADISTLAA (252 aa)).

As to quaternary structure, interacts (via KIND2) with MAP2; the interaction enhances MAP2 phosphorylation and localizes KNDC1 to dendrites. Expressed specifically in the cerebral cortex.

Its subcellular location is the cell projection. The protein localises to the dendrite. The protein resides in the perikaryon. RAS-Guanine nucleotide exchange factor (GEF) that controls the negative regulation of neuronal dendrite growth by mediating a signaling pathway linking RAS and MAP2. May be involved in cellular senescence. This chain is Kinase non-catalytic C-lobe domain-containing protein 1, found in Homo sapiens (Human).